The following is a 95-amino-acid chain: UPF0358 protein GTNG_0942 (95 aa).

Belongs to the UPF0358 family.

The polypeptide is UPF0358 protein GTNG_0942 (Geobacillus thermodenitrificans (strain NG80-2)).